The primary structure comprises 341 residues: Fructose-1,6-bisphosphatase class 1 1 (341 aa).

Residues E92, D114, L116, and D117 each contribute to the Mg(2+) site. Residues 117–120 (DGSS), N209, and K275 each bind substrate. Position 281 (E281) interacts with Mg(2+).

This sequence belongs to the FBPase class 1 family. As to quaternary structure, homotetramer. Requires Mg(2+) as cofactor.

The protein localises to the cytoplasm. The catalysed reaction is beta-D-fructose 1,6-bisphosphate + H2O = beta-D-fructose 6-phosphate + phosphate. It participates in carbohydrate biosynthesis; gluconeogenesis. This is Fructose-1,6-bisphosphatase class 1 1 from Leptothrix cholodnii (strain ATCC 51168 / LMG 8142 / SP-6) (Leptothrix discophora (strain SP-6)).